Consider the following 317-residue polypeptide: Retinol dehydrogenase 16 (317 aa).

NAD(+) is bound at residue F33–L57. Residue Y176 is the Proton acceptor of the active site. The helical transmembrane segment at L289–T309 threads the bilayer.

It belongs to the short-chain dehydrogenases/reductases (SDR) family. As to quaternary structure, homodimer. Post-translationally, not glycosylated.

Its subcellular location is the endoplasmic reticulum membrane. It localises to the microsome membrane. The enzyme catalyses all-trans-retinol--[retinol-binding protein] + NAD(+) = all-trans-retinal--[retinol-binding protein] + NADH + H(+). It carries out the reaction 9-cis-retinol + NAD(+) = 9-cis-retinal + NADH + H(+). It catalyses the reaction 11-cis-retinol + NAD(+) = 11-cis-retinal + NADH + H(+). The catalysed reaction is 13-cis-retinol + NAD(+) = 13-cis-retinal + NADH + H(+). The enzyme catalyses androsterone + NAD(+) = 5alpha-androstan-3,17-dione + NADH + H(+). It carries out the reaction 5alpha-androstane-3alpha,17beta-diol + NAD(+) = 17beta-hydroxy-5alpha-androstan-3-one + NADH + H(+). It participates in cofactor metabolism; retinol metabolism. Its function is as follows. Oxidoreductase with a preference for NAD. Oxidizes all-trans-retinol, 9-cis-retinol, 11-cis-retinol and 13-cis-retinol to the corresponding aldehydes. Has higher activity towards CRBP-bound retinol than with free retinol. Oxidizes 3-alpha-hydroxysteroids. Oxidizes androstanediol and androsterone to dihydrotestosterone and androstanedione. Can also catalyze the reverse reaction. The polypeptide is Retinol dehydrogenase 16 (Mus musculus (Mouse)).